A 283-amino-acid polypeptide reads, in one-letter code: Pantothenate synthetase (283 aa).

31–38 serves as a coordination point for ATP; the sequence is MGALHDGH. The Proton donor role is filled by His38. Gln62 is a binding site for (R)-pantoate. Gln62 contributes to the beta-alanine binding site. 148–151 is a binding site for ATP; the sequence is GKKD. Gln154 contributes to the (R)-pantoate binding site. Residues Val177 and 185-188 each bind ATP; that span reads KSSR.

It belongs to the pantothenate synthetase family. Homodimer.

The protein localises to the cytoplasm. The catalysed reaction is (R)-pantoate + beta-alanine + ATP = (R)-pantothenate + AMP + diphosphate + H(+). It participates in cofactor biosynthesis; (R)-pantothenate biosynthesis; (R)-pantothenate from (R)-pantoate and beta-alanine: step 1/1. Its function is as follows. Catalyzes the condensation of pantoate with beta-alanine in an ATP-dependent reaction via a pantoyl-adenylate intermediate. This Staphylococcus aureus (strain USA300) protein is Pantothenate synthetase.